We begin with the raw amino-acid sequence, 92 residues long: Small ribosomal subunit protein uS19 (92 aa).

It belongs to the universal ribosomal protein uS19 family.

In terms of biological role, protein S19 forms a complex with S13 that binds strongly to the 16S ribosomal RNA. This is Small ribosomal subunit protein uS19 from Psychromonas ingrahamii (strain DSM 17664 / CCUG 51855 / 37).